Here is a 102-residue protein sequence, read N- to C-terminus: Small ribosomal subunit protein uS10 (102 aa).

It belongs to the universal ribosomal protein uS10 family. As to quaternary structure, part of the 30S ribosomal subunit.

Functionally, involved in the binding of tRNA to the ribosomes. The protein is Small ribosomal subunit protein uS10 of Rhodopseudomonas palustris (strain HaA2).